A 446-amino-acid chain; its full sequence is Probable glycine dehydrogenase (decarboxylating) subunit 1 (446 aa).

Belongs to the GcvP family. N-terminal subunit subfamily. In terms of assembly, the glycine cleavage system is composed of four proteins: P, T, L and H. In this organism, the P 'protein' is a heterodimer of two subunits.

The enzyme catalyses N(6)-[(R)-lipoyl]-L-lysyl-[glycine-cleavage complex H protein] + glycine + H(+) = N(6)-[(R)-S(8)-aminomethyldihydrolipoyl]-L-lysyl-[glycine-cleavage complex H protein] + CO2. Functionally, the glycine cleavage system catalyzes the degradation of glycine. The P protein binds the alpha-amino group of glycine through its pyridoxal phosphate cofactor; CO(2) is released and the remaining methylamine moiety is then transferred to the lipoamide cofactor of the H protein. This Xanthobacter autotrophicus (strain ATCC BAA-1158 / Py2) protein is Probable glycine dehydrogenase (decarboxylating) subunit 1.